The following is a 204-amino-acid chain: Peptide deformylase (204 aa).

Positions 131 and 174 each coordinate Fe cation. Glutamate 175 is a catalytic residue. Histidine 178 serves as a coordination point for Fe cation.

This sequence belongs to the polypeptide deformylase family. Fe(2+) serves as cofactor.

It catalyses the reaction N-terminal N-formyl-L-methionyl-[peptide] + H2O = N-terminal L-methionyl-[peptide] + formate. Its function is as follows. Removes the formyl group from the N-terminal Met of newly synthesized proteins. Requires at least a dipeptide for an efficient rate of reaction. N-terminal L-methionine is a prerequisite for activity but the enzyme has broad specificity at other positions. The polypeptide is Peptide deformylase (Streptococcus agalactiae serotype III (strain NEM316)).